Reading from the N-terminus, the 372-residue chain is N-methyl-L-tryptophan oxidase (372 aa).

4–34 is an FAD binding site; the sequence is DLIIIGSGSVGAAAGYYATRAGLKVLMTDAH. Cys-307 is modified (S-8alpha-FAD cysteine).

This sequence belongs to the MSOX/MTOX family. MTOX subfamily. In terms of assembly, monomer. FAD serves as cofactor.

The enzyme catalyses N(alpha)-methyl-L-tryptophan + O2 + H2O = L-tryptophan + formaldehyde + H2O2. Its function is as follows. Catalyzes the oxidative demethylation of N-methyl-L-tryptophan. This Salmonella arizonae (strain ATCC BAA-731 / CDC346-86 / RSK2980) protein is N-methyl-L-tryptophan oxidase.